The sequence spans 411 residues: LL-diaminopimelate aminotransferase (411 aa).

2 residues coordinate substrate: tyrosine 15 and glycine 42. Pyridoxal 5'-phosphate is bound by residues tyrosine 72, 108 to 109 (SK), tyrosine 132, asparagine 187, tyrosine 218, and 246 to 248 (SFS). Substrate is bound by residues lysine 109, tyrosine 132, and asparagine 187. Residue lysine 249 is modified to N6-(pyridoxal phosphate)lysine. Pyridoxal 5'-phosphate-binding residues include arginine 257 and asparagine 292. Substrate-binding residues include asparagine 292 and arginine 388.

It belongs to the class-I pyridoxal-phosphate-dependent aminotransferase family. LL-diaminopimelate aminotransferase subfamily. In terms of assembly, homodimer. The cofactor is pyridoxal 5'-phosphate.

The catalysed reaction is (2S,6S)-2,6-diaminopimelate + 2-oxoglutarate = (S)-2,3,4,5-tetrahydrodipicolinate + L-glutamate + H2O + H(+). It participates in amino-acid biosynthesis; L-lysine biosynthesis via DAP pathway; LL-2,6-diaminopimelate from (S)-tetrahydrodipicolinate (aminotransferase route): step 1/1. Its function is as follows. Involved in the synthesis of meso-diaminopimelate (m-DAP or DL-DAP), required for both lysine and peptidoglycan biosynthesis. Catalyzes the direct conversion of tetrahydrodipicolinate to LL-diaminopimelate. The polypeptide is LL-diaminopimelate aminotransferase (Geobacter sp. (strain M21)).